Here is a 236-residue protein sequence, read N- to C-terminus: TVP38/TMEM64 family membrane protein YdjX (236 aa).

5 helical membrane passes run 7 to 27 (FLFA…FGLF), 50 to 70 (LYIL…ILVI), 72 to 92 (GGIV…ATLA), 156 to 176 (IAFW…IVIY), and 192 to 212 (FILQ…LAKL). The interval 73-183 (GIVFGPLLGT…VIYTVMASDL (111 aa)) is VTT domain.

This sequence belongs to the TVP38/TMEM64 family.

The protein localises to the cell membrane. The sequence is that of TVP38/TMEM64 family membrane protein YdjX (ydjX) from Escherichia coli (strain K12).